The sequence spans 145 residues: Antiholin-like protein LrgA (145 aa).

The next 4 membrane-spanning stretches (helical) occupy residues 10-30, 33-53, 72-92, and 96-116; these read PAHFFHQVIVIALVLFVSKII, FMPIPMPASVIGLVLLFVLLC, NIGLLFVPAGISVVNSLGVIS, and FLIIGLIIVSTILLLICTGYV.

Belongs to the CidA/LrgA family. LrgA subfamily.

The protein localises to the cell membrane. Inhibits the expression or activity of extracellular murein hydrolases by interacting, possibly with LrgB, with the holin-like proteins CidA and/or CidB. The LrgAB and CidAB proteins may affect the proton motive force of the membrane. May be involved in programmed cell death (PCD), possibly triggering PCD in response to antibiotics and environmental stresses. The sequence is that of Antiholin-like protein LrgA from Staphylococcus aureus (strain JH1).